Consider the following 372-residue polypeptide: Chaperone protein DnaJ (372 aa).

A J domain is found at 5-70 (DFYEVLGVTK…QKRAAYDRYG (66 aa)). Residues 129-207 (GKLASLTLPT…CGGAGRVTRE (79 aa)) form a CR-type zinc finger. The Zn(2+) site is built by cysteine 142, cysteine 145, cysteine 159, cysteine 162, cysteine 181, cysteine 184, cysteine 195, and cysteine 198. CXXCXGXG motif repeat units follow at residues 142 to 149 (CEACDGTG), 159 to 166 (CPTCGGQG), 181 to 188 (CPQCHGRG), and 195 to 202 (CQACGGAG).

Belongs to the DnaJ family. Homodimer. It depends on Zn(2+) as a cofactor.

It localises to the cytoplasm. In terms of biological role, participates actively in the response to hyperosmotic and heat shock by preventing the aggregation of stress-denatured proteins and by disaggregating proteins, also in an autonomous, DnaK-independent fashion. Unfolded proteins bind initially to DnaJ; upon interaction with the DnaJ-bound protein, DnaK hydrolyzes its bound ATP, resulting in the formation of a stable complex. GrpE releases ADP from DnaK; ATP binding to DnaK triggers the release of the substrate protein, thus completing the reaction cycle. Several rounds of ATP-dependent interactions between DnaJ, DnaK and GrpE are required for fully efficient folding. Also involved, together with DnaK and GrpE, in the DNA replication of plasmids through activation of initiation proteins. This Beijerinckia indica subsp. indica (strain ATCC 9039 / DSM 1715 / NCIMB 8712) protein is Chaperone protein DnaJ.